The following is a 117-amino-acid chain: Large ribosomal subunit protein bL20 (117 aa).

It belongs to the bacterial ribosomal protein bL20 family.

Binds directly to 23S ribosomal RNA and is necessary for the in vitro assembly process of the 50S ribosomal subunit. It is not involved in the protein synthesizing functions of that subunit. This chain is Large ribosomal subunit protein bL20, found in Pelobacter propionicus (strain DSM 2379 / NBRC 103807 / OttBd1).